The sequence spans 181 residues: Protein Syd (181 aa).

This sequence belongs to the Syd family.

It is found in the cell inner membrane. In terms of biological role, interacts with the SecY protein in vivo. May bind preferentially to an uncomplexed state of SecY, thus functioning either as a chelating agent for excess SecY in the cell or as a regulatory factor that negatively controls the translocase function. This is Protein Syd from Escherichia fergusonii (strain ATCC 35469 / DSM 13698 / CCUG 18766 / IAM 14443 / JCM 21226 / LMG 7866 / NBRC 102419 / NCTC 12128 / CDC 0568-73).